The primary structure comprises 140 residues: Large ribosomal subunit protein uL11 (140 aa).

It belongs to the universal ribosomal protein uL11 family. Part of the ribosomal stalk of the 50S ribosomal subunit. Interacts with L10 and the large rRNA to form the base of the stalk. L10 forms an elongated spine to which L12 dimers bind in a sequential fashion forming a multimeric L10(L12)X complex. In terms of processing, one or more lysine residues are methylated.

Forms part of the ribosomal stalk which helps the ribosome interact with GTP-bound translation factors. This is Large ribosomal subunit protein uL11 from Desulforapulum autotrophicum (strain ATCC 43914 / DSM 3382 / VKM B-1955 / HRM2) (Desulfobacterium autotrophicum).